A 644-amino-acid chain; its full sequence is Exoribonuclease 2 (644 aa).

One can recognise an RNB domain in the interval 189-516 (REDLTALDFV…NHRLLKAVIK (328 aa)). The 83-residue stretch at 561 to 643 (DTRFAAEIVD…ETRSIIARPV (83 aa)) folds into the S1 motif domain.

Belongs to the RNR ribonuclease family. RNase II subfamily.

The protein localises to the cytoplasm. It carries out the reaction Exonucleolytic cleavage in the 3'- to 5'-direction to yield nucleoside 5'-phosphates.. Involved in mRNA degradation. Hydrolyzes single-stranded polyribonucleotides processively in the 3' to 5' direction. This chain is Exoribonuclease 2, found in Escherichia coli O139:H28 (strain E24377A / ETEC).